The chain runs to 1325 residues: SCAN domain-containing protein 3 (1325 aa).

Positions 52-134 (RQRFRQFCYQ…TLLEDLEREL (83 aa)) constitute an SCAN box domain. Residues 246-275 (KAKYCQLIKEVKEAKAKAKKESVDYRRLAR) are a coiled coil. One can recognise an Integrase catalytic domain in the interval 366-526 (KSIKEVSSRC…TPCESAFSSE (161 aa)). The stretch at 542 to 568 (ASLHTENELDQADKELENTLRAQYEEN) forms a coiled coil.

Weakly expressed in the lung (at protein level).

It localises to the nucleus. The chain is SCAN domain-containing protein 3 from Homo sapiens (Human).